Consider the following 198-residue polypeptide: dITP/XTP pyrophosphatase (198 aa).

Residue 11-16 (THNPGK) participates in substrate binding. Glu44 and Asp73 together coordinate Mg(2+). The active-site Proton acceptor is Asp73. Substrate is bound by residues Ser74, 156–159 (FGYD), Lys179, and 184–185 (HR).

This sequence belongs to the HAM1 NTPase family. As to quaternary structure, homodimer. It depends on Mg(2+) as a cofactor.

The catalysed reaction is XTP + H2O = XMP + diphosphate + H(+). The enzyme catalyses dITP + H2O = dIMP + diphosphate + H(+). It carries out the reaction ITP + H2O = IMP + diphosphate + H(+). Pyrophosphatase that catalyzes the hydrolysis of nucleoside triphosphates to their monophosphate derivatives, with a high preference for the non-canonical purine nucleotides XTP (xanthosine triphosphate), dITP (deoxyinosine triphosphate) and ITP. Seems to function as a house-cleaning enzyme that removes non-canonical purine nucleotides from the nucleotide pool, thus preventing their incorporation into DNA/RNA and avoiding chromosomal lesions. The sequence is that of dITP/XTP pyrophosphatase (ysnA) from Bacillus subtilis (strain 168).